The primary structure comprises 115 residues: Large ribosomal subunit protein bL20c (115 aa).

The protein belongs to the bacterial ribosomal protein bL20 family.

Its subcellular location is the plastid. It is found in the chloroplast. Its function is as follows. Binds directly to 23S ribosomal RNA and is necessary for the in vitro assembly process of the 50S ribosomal subunit. It is not involved in the protein synthesizing functions of that subunit. This is Large ribosomal subunit protein bL20c (rpl20) from Cyanidium caldarium (Red alga).